A 515-amino-acid chain; its full sequence is Bifunctional purine biosynthesis protein PurH (515 aa).

The MGS-like domain maps to 1-145 (MTKRVLISVS…KNHASVTVVV (145 aa)).

Belongs to the PurH family.

It catalyses the reaction (6R)-10-formyltetrahydrofolate + 5-amino-1-(5-phospho-beta-D-ribosyl)imidazole-4-carboxamide = 5-formamido-1-(5-phospho-D-ribosyl)imidazole-4-carboxamide + (6S)-5,6,7,8-tetrahydrofolate. It carries out the reaction IMP + H2O = 5-formamido-1-(5-phospho-D-ribosyl)imidazole-4-carboxamide. It functions in the pathway purine metabolism; IMP biosynthesis via de novo pathway; 5-formamido-1-(5-phospho-D-ribosyl)imidazole-4-carboxamide from 5-amino-1-(5-phospho-D-ribosyl)imidazole-4-carboxamide (10-formyl THF route): step 1/1. The protein operates within purine metabolism; IMP biosynthesis via de novo pathway; IMP from 5-formamido-1-(5-phospho-D-ribosyl)imidazole-4-carboxamide: step 1/1. This Streptococcus pneumoniae (strain Taiwan19F-14) protein is Bifunctional purine biosynthesis protein PurH.